Consider the following 113-residue polypeptide: Nucleoid-associated protein SAV_4556 (113 aa).

Belongs to the YbaB/EbfC family. In terms of assembly, homodimer.

The protein resides in the cytoplasm. It is found in the nucleoid. Functionally, binds to DNA and alters its conformation. May be involved in regulation of gene expression, nucleoid organization and DNA protection. This chain is Nucleoid-associated protein SAV_4556, found in Streptomyces avermitilis (strain ATCC 31267 / DSM 46492 / JCM 5070 / NBRC 14893 / NCIMB 12804 / NRRL 8165 / MA-4680).